The following is a 591-amino-acid chain: PE-PGRS family protein PE_PGRS5 (591 aa).

Residues 1-93 enclose the PE domain; the sequence is MSFVIAQPEM…AGAYASAEAA (93 aa). Residues 94-591 form a PGRS region; the sequence is NAGPNMLAAV…GGKGNNGNPG (498 aa). Composition is skewed to gly residues over residues 303-324, 336-363, 371-412, 477-491, 539-567, and 579-591; these read GAGG…GNGG, ASGG…GHVS, GAGG…GDGG, SEAG…GGDG, AGTG…GVNG, and GATG…GNPG. Disordered stretches follow at residues 303–412, 468–491, and 539–591; these read GAGG…GDGG, GSVN…GGDG, and AGTG…GNPG.

This sequence belongs to the mycobacterial PE family. PGRS subfamily. Interacts with human TLR4.

It is found in the host endoplasmic reticulum. In terms of biological role, involved in endoplasmic reticulum (ER) stress-mediated apoptosis through human Toll-like receptor 4 (TLR4) signaling pathway. Localizes to the host ER, leading to ER stress, disruption of intracellular Ca(2+) homeostasis and increase of nitric oxide (NO) and reactive oxygen species (ROS) levels. Stress response results in caspase-8 activation and apoptosis of macrophage cells. Apoptosis may lead to dissemination of the bacteria, thereby spreading the disease. This is PE-PGRS family protein PE_PGRS5 from Mycobacterium tuberculosis (strain ATCC 25618 / H37Rv).